The chain runs to 732 residues: Exonuclease 1 (732 aa).

The N-domain stretch occupies residues 1-99; it reads MGITGLIPFV…KRRRDSRKQS (99 aa). Residues aspartate 30, aspartate 78, glutamate 150, aspartate 152, aspartate 171, aspartate 173, and aspartate 226 each coordinate Mg(2+). An I-domain region spans residues 138–230; the sequence is RSRNVDCIVA…ILSGCDYLDS (93 aa). Disordered regions lie at residues 422 to 471, 524 to 625, and 661 to 716; these read YSFK…QRSP, DEQT…TNST, and SCSS…VSQN. Phosphoserine occurs at positions 431 and 433. Positions 432–442 are enriched in basic and acidic residues; it reads PSREDSVDQER. Phosphothreonine is present on threonine 443. Serine 447 is subject to Phosphoserine. Composition is skewed to basic and acidic residues over residues 457-467 and 525-537; these read FAKERTGEEAN and EQTR…LRDT. 2 stretches are compositionally biased toward polar residues: residues 572–593 and 608–625; these read RCSS…SLLE and DLNN…TNST. Residues 661 to 677 show a composition bias toward low complexity; that stretch reads SCSSDQRASSTSSSSQQ. Residues 703–716 show a composition bias toward polar residues; sequence KSRTNGKLGAVSQN.

The protein belongs to the XPG/RAD2 endonuclease family. EXO1 subfamily. The cofactor is Mg(2+). As to expression, specifically expressed in the female germline.

It localises to the nucleus. Its function is as follows. 5'-&gt;3' double-stranded DNA exonuclease which may also contain a cryptic 3'-&gt;5' double-stranded DNA exonuclease activity. Also exhibits endonuclease activity against 5'-overhanging flap structures similar to those generated by displacement synthesis when DNA polymerase encounters the 5'-end of a downstream Okazaki fragment. Required for DNA mismatch repair (MMR). The chain is Exonuclease 1 (tos) from Drosophila melanogaster (Fruit fly).